Here is a 356-residue protein sequence, read N- to C-terminus: DNA polymerase IV (356 aa).

One can recognise a UmuC domain in the interval 7 to 188; the sequence is IIHIDMDCFY…LPLKKIPRVG (182 aa). Residues Asp11 and Asp106 each coordinate Mg(2+). Glu107 is a catalytic residue.

It belongs to the DNA polymerase type-Y family. Monomer. Mg(2+) serves as cofactor.

Its subcellular location is the cytoplasm. It carries out the reaction DNA(n) + a 2'-deoxyribonucleoside 5'-triphosphate = DNA(n+1) + diphosphate. Its function is as follows. Poorly processive, error-prone DNA polymerase involved in untargeted mutagenesis. Copies undamaged DNA at stalled replication forks, which arise in vivo from mismatched or misaligned primer ends. These misaligned primers can be extended by PolIV. Exhibits no 3'-5' exonuclease (proofreading) activity. May be involved in translesional synthesis, in conjunction with the beta clamp from PolIII. The chain is DNA polymerase IV from Actinobacillus pleuropneumoniae serotype 5b (strain L20).